The following is a 410-amino-acid chain: Chaperonin GroEL (410 aa).

ATP is bound by residues 29–32 (TAGP), lysine 50, and 86–90 (DGTTT).

This sequence belongs to the chaperonin (HSP60) family. Forms a cylinder of 14 subunits composed of two heptameric rings stacked back-to-back. Interacts with the co-chaperonin GroES.

The protein resides in the cytoplasm. It carries out the reaction ATP + H2O + a folded polypeptide = ADP + phosphate + an unfolded polypeptide.. Its function is as follows. Together with its co-chaperonin GroES, plays an essential role in assisting protein folding. The GroEL-GroES system forms a nano-cage that allows encapsulation of the non-native substrate proteins and provides a physical environment optimized to promote and accelerate protein folding. This Ehrlichia canis protein is Chaperonin GroEL.